A 248-amino-acid chain; its full sequence is PF03932 family protein CutC (248 aa).

This sequence belongs to the CutC family. Homodimer.

It localises to the cytoplasm. This is PF03932 family protein CutC from Escherichia coli O7:K1 (strain IAI39 / ExPEC).